A 349-amino-acid chain; its full sequence is Ion-translocating oxidoreductase complex subunit D (349 aa).

3 consecutive transmembrane segments (helical) span residues 20–42, 77–99, and 124–144; these read VMQR…FGWG, SAML…WMIV, and AMAA…TWIA. Threonine 185 carries the FMN phosphoryl threonine modification. Helical transmembrane passes span 212-232, 239-259, 265-285, 291-311, and 315-335; these read STGV…LVLL, WHIS…GFLL, ASPL…FIAT, ATSP…VYII, and GGYP…APFI.

It belongs to the NqrB/RnfD family. In terms of assembly, the complex is composed of six subunits: RnfA, RnfB, RnfC, RnfD, RnfE and RnfG. Requires FMN as cofactor.

It is found in the cell inner membrane. Part of a membrane-bound complex that couples electron transfer with translocation of ions across the membrane. This Shewanella baltica (strain OS195) protein is Ion-translocating oxidoreductase complex subunit D.